Reading from the N-terminus, the 867-residue chain is MRARYMLGFGVLCLLTWAVYVSESSPTDKQAKLRLMSVRRARQNKSRQGQIIKTRASSTWINDKRQQMQGDEGVQFRRNVQSRKVLAQRRPAQGGTRNPIQQDDGTPGARARVSRMPSSAGSPNLLASFAGKNRLLVISAPHDSDGYYRLMMSLLKPEVYCELAERHVHQIVMFHQEGELGGKIRRITNEGKVMEEPLDTALIPRLMTFLKLEKGKFGMVLLKKTLQVEERYPYPVRLEAMYEVIDQSPMRKMEKVRQKGFVQKCKGAGVEGQVVEGVLTTDSQVDPPTERRKEIRKPIRRPTTTTTPAPTRPTTTTTTTKATTTTTTRPPTTTRSTTTTTTTTTTTTRPTTTTTRTTTTPRTTRANTTPQWIPAHKTTAEPYYYNRRDRYQTTSPPTDSARYRDNHTSKKEYNHRHTNTIPTQHKPTKVRPTKKKNGDKDISNAYEEKYDVGVPTDAYPEEKEEEIVPTKRGKGKTDKKKKKDKTDKLSKKDKAERRGKDGKGGKKNGKKVPKILEKEDYQKPTKRPPPPPPPKGTLATFLDYFESRRRLILITSPTEENSMYIQQRDEYLEHVCEMAIRKVTIITIFGTFRNSTMKIDHYQLEKDKPMKGLRQEDLENQDLIMELRKEYGMTYNDFYVVLTDLDMKAKQYYEVPIAMKAVFDYIDTFSSRIREMEQQKRDGVTCKKEDKPRSLENFLSRFRWRRRLFVISAPNDEEWAYQQQLYALTSQACNLGLRHVSVLKLVGTDLLDMGGVLELYPINGSATVEREGISATLVRDIRNYFQISPEYFSMLLVGKDGNVKSWYPSPMWSMAIIYDLIDSMQLRRQEMAIQQSLGMRCPEDEYGGYGYHHHEGYQEGYHQGYGY.

A signal peptide spans 1–18; it reads MRARYMLGFGVLCLLTWA. Disordered stretches follow at residues 83–121 and 282–539; these read RKVL…SSAG and DSQV…GTLA. Residues 95–104 show a composition bias toward polar residues; the sequence is GTRNPIQQDD. Residues 288–297 are compositionally biased toward basic and acidic residues; sequence PTERRKEIRK. Residues 301 to 370 show a composition bias toward low complexity; the sequence is RPTTTTTPAP…PRTTRANTTP (70 aa). A compositionally biased stretch (basic and acidic residues) spans 401–412; the sequence is ARYRDNHTSKKE. A compositionally biased stretch (basic residues) spans 426–435; that stretch reads KPTKVRPTKK. The segment covering 436–451 has biased composition (basic and acidic residues); that stretch reads KNGDKDISNAYEEKYD. A compositionally biased stretch (basic residues) spans 471 to 483; it reads KRGKGKTDKKKKK. Composition is skewed to basic and acidic residues over residues 484 to 504 and 514 to 523; these read DKTD…DGKG and KILEKEDYQK.

This sequence belongs to the CCDC80 family. As to quaternary structure, binds to various extracellular matrix proteins.

The protein resides in the secreted. Its subcellular location is the extracellular space. It is found in the extracellular matrix. In terms of biological role, promotes cell adhesion and matrix assembly. This chain is Coiled-coil domain-containing protein 80 (ccdc80), found in Danio rerio (Zebrafish).